A 1407-amino-acid chain; its full sequence is DNA-directed RNA polymerase subunit beta' (1407 aa).

Positions 70, 72, 85, and 88 each coordinate Zn(2+). Aspartate 460, aspartate 462, and aspartate 464 together coordinate Mg(2+). Cysteine 814, cysteine 888, cysteine 895, and cysteine 898 together coordinate Zn(2+).

The protein belongs to the RNA polymerase beta' chain family. The RNAP catalytic core consists of 2 alpha, 1 beta, 1 beta' and 1 omega subunit. When a sigma factor is associated with the core the holoenzyme is formed, which can initiate transcription. Mg(2+) is required as a cofactor. It depends on Zn(2+) as a cofactor.

It catalyses the reaction RNA(n) + a ribonucleoside 5'-triphosphate = RNA(n+1) + diphosphate. In terms of biological role, DNA-dependent RNA polymerase catalyzes the transcription of DNA into RNA using the four ribonucleoside triphosphates as substrates. This is DNA-directed RNA polymerase subunit beta' from Salmonella arizonae (strain ATCC BAA-731 / CDC346-86 / RSK2980).